A 455-amino-acid chain; its full sequence is Beta-1,4-mannosyltransferase bre-3 (455 aa).

The protein belongs to the glycosyltransferase 2 family.

It is found in the cytoplasm. It functions in the pathway protein modification; protein glycosylation. Glycosyltransferase with a proposed role in glycosphingolipid biosynthesis. Involved in susceptibility to pore-forming crystal toxins in conjunction with bre-1, bre-2 and bre-4. Involved in resistance to the nematotoxic C.cinerea galectin Cgl2. Has a role in determining brood size. This Caenorhabditis briggsae protein is Beta-1,4-mannosyltransferase bre-3.